The chain runs to 335 residues: Glycerol-3-phosphate dehydrogenase [NAD(P)+] (335 aa).

Positions 15, 16, 36, and 110 each coordinate NADPH. Residues K110, G139, and T141 each coordinate sn-glycerol 3-phosphate. Residue A143 participates in NADPH binding. Residues K195, D248, S258, R259, and N260 each contribute to the sn-glycerol 3-phosphate site. K195 functions as the Proton acceptor in the catalytic mechanism. Position 259 (R259) interacts with NADPH. V283 and E285 together coordinate NADPH.

The protein belongs to the NAD-dependent glycerol-3-phosphate dehydrogenase family.

The protein resides in the cytoplasm. It carries out the reaction sn-glycerol 3-phosphate + NAD(+) = dihydroxyacetone phosphate + NADH + H(+). The enzyme catalyses sn-glycerol 3-phosphate + NADP(+) = dihydroxyacetone phosphate + NADPH + H(+). It functions in the pathway membrane lipid metabolism; glycerophospholipid metabolism. Its function is as follows. Catalyzes the reduction of the glycolytic intermediate dihydroxyacetone phosphate (DHAP) to sn-glycerol 3-phosphate (G3P), the key precursor for phospholipid synthesis. The chain is Glycerol-3-phosphate dehydrogenase [NAD(P)+] from Pseudoalteromonas translucida (strain TAC 125).